The primary structure comprises 534 residues: Probable bifunctional tRNA threonylcarbamoyladenosine biosynthesis protein (534 aa).

The kae1 stretch occupies residues 1–325 (MLCLGIEGTA…YRTDEVDVPW (325 aa)). Residues His-108, His-112, and Tyr-129 each contribute to the Fe cation site. Residues 129 to 133 (YVSGG), Asp-161, Gly-174, Glu-178, and Asn-258 each bind L-threonylcarbamoyladenylate. Asp-286 lines the Fe cation pocket. Positions 335–534 (LPPDILAKGA…EIESRGRYTD (200 aa)) constitute a Protein kinase domain. Residues 340–348 (LAKGAEANI) and Lys-361 each bind ATP. Asp-451 acts as the Proton acceptor; for kinase activity in catalysis.

It in the N-terminal section; belongs to the KAE1 / TsaD family. This sequence in the C-terminal section; belongs to the protein kinase superfamily. Tyr protein kinase family. BUD32 subfamily. As to quaternary structure, component of the KEOPS complex that consists of Kae1, Bud32, Cgi121 and Pcc1; the whole complex dimerizes. Fe(2+) serves as cofactor.

The protein localises to the cytoplasm. The catalysed reaction is L-seryl-[protein] + ATP = O-phospho-L-seryl-[protein] + ADP + H(+). The enzyme catalyses L-threonyl-[protein] + ATP = O-phospho-L-threonyl-[protein] + ADP + H(+). It catalyses the reaction L-threonylcarbamoyladenylate + adenosine(37) in tRNA = N(6)-L-threonylcarbamoyladenosine(37) in tRNA + AMP + H(+). Required for the formation of a threonylcarbamoyl group on adenosine at position 37 (t(6)A37) in tRNAs that read codons beginning with adenine. Is a component of the KEOPS complex that is probably involved in the transfer of the threonylcarbamoyl moiety of threonylcarbamoyl-AMP (TC-AMP) to the N6 group of A37. The Kae1 domain likely plays a direct catalytic role in this reaction. The Bud32 domain probably displays kinase activity that regulates Kae1 function. In Methanothermobacter thermautotrophicus (strain ATCC 29096 / DSM 1053 / JCM 10044 / NBRC 100330 / Delta H) (Methanobacterium thermoautotrophicum), this protein is Probable bifunctional tRNA threonylcarbamoyladenosine biosynthesis protein.